The chain runs to 427 residues: ATP-sensitive inward rectifier potassium channel 12 (427 aa).

The Cytoplasmic portion of the chain corresponds to 1–77; sequence MTAASRANPY…LADMFTTCVD (77 aa). Cys75 carries the post-translational modification S-nitrosocysteine. A helical membrane pass occupies residues 78–104; the sequence is IRWRYMLLIFSLAFLASWLLFGIIFWV. A 1,2-diacyl-sn-glycero-3-phospho-(1D-myo-inositol-4,5-bisphosphate) is bound by residues Arg79 and Arg81. At 105–129 the chain is on the extracellular side; it reads IAVAHGDLEPAEGRGRTPCVLQVHG. Cys123 and Cys155 are disulfide-bonded. Positions 130–146 form an intramembrane region, helical; Pore-forming; it reads FMAAFLFSIETQTTIGY. K(+) contacts are provided by Thr143, Ile144, Gly145, and Tyr146. The short motif at 143–148 is the Selectivity filter element; that stretch reads TIGYGL. At 147–155 the chain is on the extracellular side; sequence GLRCVTEEC. Residues 156–183 form a helical membrane-spanning segment; sequence PVAVFMVVAQSIVGCIIDSFMIGAIMAK. Lys183 and Lys188 together coordinate a 1,2-diacyl-sn-glycero-3-phospho-(1D-myo-inositol-4,5-bisphosphate). At 184 to 427 the chain is on the cytoplasmic side; it reads MGRPKKRAQT…ERPYRRESEI (244 aa). The disordered stretch occupies residues 387 to 427; that stretch reads DEEDEVATDRDGRSPQPEHDFDRLQASSGALERPYRRESEI. Basic and acidic residues predominate over residues 393–409; the sequence is ATDRDGRSPQPEHDFDR. A PDZ-binding motif is present at residues 425-427; that stretch reads SEI.

It belongs to the inward rectifier-type potassium channel (TC 1.A.2.1) family. KCNJ12 subfamily. In terms of assembly, homotetramer. Forms heteromer with KCNJ4. Can form heteromeric channels with Kir2.6/KCNJ18. Association, via its PDZ-recognition domain, with LIN7A, LIN7B, LIN7C, DLG1, CASK and APBA1 plays a key role in its localization and trafficking. In terms of tissue distribution, highest level in cerebellum. Moderately found in kidney, forebrain and skeletal muscle. Not detected in uterus, liver and pancreas.

The protein localises to the membrane. Its subcellular location is the cell membrane. It localises to the sarcolemma. The protein resides in the T-tubule. The catalysed reaction is K(+)(in) = K(+)(out). With respect to regulation, activated by phosphatidylinositol 4,5-biphosphate (PtdIns(4,5)P2). PtdIns(4,5)P2 binding to the cytoplasmic side of the channel triggers a conformation change leading to channel opening. Inhibited by Ba(2+). Its function is as follows. Inward rectifying potassium channel that probably participates in controlling the resting membrane potential in electrically excitable cells. It probably participates in establishing action potential waveform and excitability of neuronal and muscle tissues. Inward rectifier potassium channels are characterized by a greater tendency to allow potassium to flow into the cell rather than out of it. Their voltage dependence is regulated by the concentration of extracellular potassium; as external potassium is raised, the voltage range of the channel opening shifts to more positive voltages. The inward rectification is mainly due to the blockage of outward current by internal magnesium. This chain is ATP-sensitive inward rectifier potassium channel 12 (Kcnj12), found in Rattus norvegicus (Rat).